The primary structure comprises 454 residues: Septin-10 (454 aa).

A Septin-type G domain is found at 63–329; the sequence is QGFCFNILCV…ELYRRCKLEE (267 aa). The tract at residues 73–80 is G1 motif; sequence GETGIGKS. GTP-binding positions include 73-80, glycine 128, 209-217, glycine 263, and arginine 278; these read GETGIGKS and KADTVSKTE. The G3 motif stretch occupies residues 125–128; it reads NTVG. The tract at residues 208–211 is G4 motif; it reads AKAD.

Belongs to the TRAFAC class TrmE-Era-EngA-EngB-Septin-like GTPase superfamily. Septin GTPase family. As to quaternary structure, septins polymerize into heterooligomeric protein complexes that form filaments, and can associate with cellular membranes, actin filaments and microtubules. GTPase activity is required for filament formation. Interacts with ADGB. In terms of processing, proteolytically cleaved in vitro in a calmodulin-dependent manner. Widely expressed. Abundantly expressed in heart and kidney, placenta, skeletal muscles, liver and lung, as well as various tumor cell lines.

It is found in the cytoplasm. The protein resides in the cytoskeleton. Its subcellular location is the cell projection. The protein localises to the cilium. It localises to the flagellum. In terms of biological role, filament-forming cytoskeletal GTPase. May play a role in cytokinesis (Potential). In Homo sapiens (Human), this protein is Septin-10.